Here is a 634-residue protein sequence, read N- to C-terminus: Tyrosine-protein kinase transforming protein erbB (634 aa).

One can recognise a Protein kinase domain in the interval 132-399; that stretch reads FKKVKVLGSG…KMARDPPRYL (268 aa). Residues 138 to 146 and Lys-165 each bind ATP; that span reads LGSGAFGTV. The active-site Proton acceptor is Asp-257.

This sequence belongs to the protein kinase superfamily. Tyr protein kinase family. EGF receptor subfamily.

It carries out the reaction L-tyrosyl-[protein] + ATP = O-phospho-L-tyrosyl-[protein] + ADP + H(+). In Avian leukosis virus (ALV), this protein is Tyrosine-protein kinase transforming protein erbB (V-ERBB).